Here is a 262-residue protein sequence, read N- to C-terminus: Shikimate dehydrogenase (NADP(+)) (262 aa).

Shikimate-binding positions include 13–15 (SLS) and threonine 59. The Proton acceptor role is filled by lysine 63. An NADP(+)-binding site is contributed by aspartate 75. 2 residues coordinate shikimate: asparagine 84 and aspartate 99. NADP(+) contacts are provided by residues 122-126 (GAGGA), 144-149 (NRTLEK), and methionine 205. A shikimate-binding site is contributed by tyrosine 207. Glycine 228 contributes to the NADP(+) binding site.

Belongs to the shikimate dehydrogenase family. As to quaternary structure, homodimer.

It carries out the reaction shikimate + NADP(+) = 3-dehydroshikimate + NADPH + H(+). Its pathway is metabolic intermediate biosynthesis; chorismate biosynthesis; chorismate from D-erythrose 4-phosphate and phosphoenolpyruvate: step 4/7. Functionally, involved in the biosynthesis of the chorismate, which leads to the biosynthesis of aromatic amino acids. Catalyzes the reversible NADPH linked reduction of 3-dehydroshikimate (DHSA) to yield shikimate (SA). The chain is Shikimate dehydrogenase (NADP(+)) from Ignicoccus hospitalis (strain KIN4/I / DSM 18386 / JCM 14125).